Consider the following 309-residue polypeptide: ATP synthase gamma chain (309 aa).

Belongs to the ATPase gamma chain family. As to quaternary structure, F-type ATPases have 2 components, CF(1) - the catalytic core - and CF(0) - the membrane proton channel. CF(1) has five subunits: alpha(3), beta(3), gamma(1), delta(1), epsilon(1). CF(0) has three main subunits: a, b and c.

The protein localises to the cell membrane. Produces ATP from ADP in the presence of a proton gradient across the membrane. The gamma chain is believed to be important in regulating ATPase activity and the flow of protons through the CF(0) complex. The protein is ATP synthase gamma chain of Mycobacterium sp. (strain JLS).